Reading from the N-terminus, the 451-residue chain is Exodeoxyribonuclease 7 large subunit (451 aa).

The protein belongs to the XseA family. Heterooligomer composed of large and small subunits.

Its subcellular location is the cytoplasm. The catalysed reaction is Exonucleolytic cleavage in either 5'- to 3'- or 3'- to 5'-direction to yield nucleoside 5'-phosphates.. Its function is as follows. Bidirectionally degrades single-stranded DNA into large acid-insoluble oligonucleotides, which are then degraded further into small acid-soluble oligonucleotides. This chain is Exodeoxyribonuclease 7 large subunit, found in Neisseria meningitidis serogroup A / serotype 4A (strain DSM 15465 / Z2491).